The primary structure comprises 628 residues: MGYEAGQYDVVVVGAGHAGVEAALASARQGAKTLVLTINLDMVAFMPCNPSVGGPAKGIVVREIDALGGEMAKNIDKTHIQMRLLNTGKGPAVRALRAQADKFQYQHEMKKTLENEPNLTMLQGMVERLLIEDGECRGVITQTGAEYRSKTVVLTTGTFLRGKIILGDLSYSSGPNNQQPSIKLSEHLEELGFDLVRFKTGTPPRVNSHSIDYSKTEIQPGDEVPRAFSYETVEYITDQLPCWLTYTSPETHEIIDNNLHRSPMYSGMIKGTGPRYCPSIEDKVVRFNDKPRHQIFLEPEGRNTQEVYVQGLSTSLPEDVQRKMLSTIPGLENVQMMRAGYAIEYDAIVPTQLWPTLETKKIPGLFTAGQINGTSGYEEAAGQGIMAGINAGRKALGKEEVILSRSDAYIGVLIDDLVTKGTNEPYRLLTSRAEYRLLLRHDNADLRLTEIGYQIGLISEERYQKFQEKKAAIEAEKKRLHSVIIKPTKENQEYIRSLGGSELKDGIRATDLMKRPEMNYETVTALAPPEQKVAGDVAEQVEIQIKYEGYIEKSLQQVEKLKKMENKKIPDRIDYDAIKGIATEARQKLKEVRPLSVAQASRISGVNPADISILLVYLEQGRIAKVAE.

FAD is bound by residues 14–19 (GAGHAG), valine 126, and serine 181. 273 to 287 (GPRYCPSIEDKVVRF) contacts NAD(+). Glutamine 370 is a binding site for FAD.

The protein belongs to the MnmG family. As to quaternary structure, homodimer. Heterotetramer of two MnmE and two MnmG subunits. Requires FAD as cofactor.

The protein localises to the cytoplasm. Its function is as follows. NAD-binding protein involved in the addition of a carboxymethylaminomethyl (cmnm) group at the wobble position (U34) of certain tRNAs, forming tRNA-cmnm(5)s(2)U34. The chain is tRNA uridine 5-carboxymethylaminomethyl modification enzyme MnmG from Bacillus licheniformis (strain ATCC 14580 / DSM 13 / JCM 2505 / CCUG 7422 / NBRC 12200 / NCIMB 9375 / NCTC 10341 / NRRL NRS-1264 / Gibson 46).